The chain runs to 293 residues: MERLLINTIWRSYATKLTGSQVKLMARGLPKKQPIIGVQDIIVVASGKGGVGKSTVAVNFACSLAKLGKRVGLLDGDIFGPTIPLLMNVHGEPVVNDKNLMIPPQNYNVKCLSMGMLTPVETSVIWRGPLVMSAIQRLLKGTDWGLLDVLVIDTPPGTGDVHLSLSQHAPITGVILVTTPHTAAVQVTLKGASMYEKLNVPIFGVVENMKYTICQNCNQRLEFFKDSRISSLPRKLISLPLDSRIADSNESGVPVVIKYPDSKYSYLFTQLAEEITQILNEQRCNQNQNNSAH.

Residues 214-217 (CQNC) are CXXC motif probably involved in coordinating iron-sulfur cluster binding.

Belongs to the Mrp/NBP35 ATP-binding proteins family. As to quaternary structure, homodimer; dimerization is not reliant on iron-sulfur cluster binding. [4Fe-4S] cluster is required as a cofactor.

The protein localises to the mitochondrion membrane. Its function is as follows. Iron-sulfur cluster transfer protein involved in the assembly of the mitochondrial membrane respiratory chain NADH dehydrogenase (Complex I). May deliver one or more Fe-S clusters to complex I subunits. Alleviates pausing in mitochondrial DNA (mtDNA) replication at slow zone 2. May be involved in mtDNA-helicase-mediated mtDNA unwinding and replication by transferring iron-sulfur clusters. This is Iron-sulfur cluster transfer protein Nubpl from Drosophila melanogaster (Fruit fly).